A 252-amino-acid chain; its full sequence is ATP synthase subunit a (252 aa).

The next 6 helical transmembrane spans lie at 29-49 (FTNV…FLFI), 87-107 (FFPL…IGLF), 117-137 (IMIT…YGFY), 146-166 (LFVP…IEVI), 196-216 (FIVS…LPLI), and 219-239 (VAIT…FTVL).

Belongs to the ATPase A chain family. In terms of assembly, F-type ATPases have 2 components, CF(1) - the catalytic core - and CF(0) - the membrane proton channel. CF(1) has five subunits: alpha(3), beta(3), gamma(1), delta(1), epsilon(1). CF(0) has three main subunits: a(1), b(2) and c(9-12). The alpha and beta chains form an alternating ring which encloses part of the gamma chain. CF(1) is attached to CF(0) by a central stalk formed by the gamma and epsilon chains, while a peripheral stalk is formed by the delta and b chains.

Its subcellular location is the cell inner membrane. In terms of biological role, key component of the proton channel; it plays a direct role in the translocation of protons across the membrane. This chain is ATP synthase subunit a, found in Bartonella henselae (strain ATCC 49882 / DSM 28221 / CCUG 30454 / Houston 1) (Rochalimaea henselae).